A 397-amino-acid chain; its full sequence is Acetate kinase (397 aa).

A Mg(2+)-binding site is contributed by N8. K15 provides a ligand contact to ATP. R89 lines the substrate pocket. Catalysis depends on D146, which acts as the Proton donor/acceptor. Residues 206-210, 280-282, and 328-332 each bind ATP; these read HLGNG, DMR, and GVGEN. E382 contacts Mg(2+).

The protein belongs to the acetokinase family. In terms of assembly, homodimer. Mg(2+) is required as a cofactor. Mn(2+) serves as cofactor.

The protein resides in the cytoplasm. The catalysed reaction is acetate + ATP = acetyl phosphate + ADP. The protein operates within metabolic intermediate biosynthesis; acetyl-CoA biosynthesis; acetyl-CoA from acetate: step 1/2. Its function is as follows. Catalyzes the formation of acetyl phosphate from acetate and ATP. Can also catalyze the reverse reaction. This chain is Acetate kinase, found in Leifsonia xyli subsp. xyli (strain CTCB07).